We begin with the raw amino-acid sequence, 137 residues long: 15 kDa protein A (137 aa).

An N-terminal signal peptide occupies residues 1–20 (MAGVWKVLVVLVGLAVVACA). 2 disulfides stabilise this stretch: Cys77–Cys88 and Cys99–Cys116.

The protein belongs to the cathelicidin family. Large granules of neutrophils.

It localises to the secreted. Its function is as follows. Binds to bacterial lipopolysaccharides (LPS), potentiates strongly the early antibacterial effects of BPI. Inhibits the late lethal action of BPI. The polypeptide is 15 kDa protein A (Oryctolagus cuniculus (Rabbit)).